The following is a 506-amino-acid chain: Aspartic proteinase A1 (506 aa).

Positions 1-24 are cleaved as a signal peptide; the sequence is MKIYSRTVAVSLIVSFLLCFSAFA. Residues 25–64 constitute a propeptide, activation peptide; the sequence is ERNDGTFRVGLKKLKLDSKNRLAARVESKQEKPLRAYRLG. The 422-residue stretch at 82 to 503 folds into the Peptidase A1 domain; that stretch reads YYGEIAIGTP…DFGNEQVGFA (422 aa). Residue D100 is part of the active site. Intrachain disulfides connect C113/C119 and C278/C282. D287 is an active-site residue. One can recognise a Saposin B-type domain in the interval 312-417; the sequence is VVSQQCKTVV…NELCERLPSP (106 aa). 4 disulfide bridges follow: C317/C411, C342/C383, C348/C380, and C425/C462. An N-linked (GlcNAc...) asparagine glycan is attached at N397.

It belongs to the peptidase A1 family. Expressed in roots, leaves, stems, petals, carpels, seed pods and dry seeds.

It is found in the vacuole. Its function is as follows. Involved in the breakdown of propeptides of storage proteins in protein-storage vacuoles. Possesses aspartic protease activity in vitro. In Arabidopsis thaliana (Mouse-ear cress), this protein is Aspartic proteinase A1 (APA1).